A 153-amino-acid chain; its full sequence is Phosphatase NudJ (153 aa).

Residues Lys3–Gln131 form the Nudix hydrolase domain. Positions Gly36–Gly57 match the Nudix box motif.

The protein belongs to the Nudix hydrolase family. NudJ subfamily. In terms of assembly, monomer. Requires Mg(2+) as cofactor.

The protein is Phosphatase NudJ (nudJ) of Shigella boydii serotype 4 (strain Sb227).